Consider the following 455-residue polypeptide: 2-succinylbenzoate--CoA ligase (455 aa).

The protein belongs to the ATP-dependent AMP-binding enzyme family. MenE subfamily.

The catalysed reaction is 2-succinylbenzoate + ATP + CoA = 2-succinylbenzoyl-CoA + AMP + diphosphate. Its pathway is quinol/quinone metabolism; 1,4-dihydroxy-2-naphthoate biosynthesis; 1,4-dihydroxy-2-naphthoate from chorismate: step 5/7. It participates in quinol/quinone metabolism; menaquinone biosynthesis. Its function is as follows. Converts 2-succinylbenzoate (OSB) to 2-succinylbenzoyl-CoA (OSB-CoA). The polypeptide is 2-succinylbenzoate--CoA ligase (Salmonella typhimurium (strain LT2 / SGSC1412 / ATCC 700720)).